The sequence spans 387 residues: Protein RecA (387 aa).

An ATP-binding site is contributed by 78–85; it reads GPESSGKT. The span at 355-369 shows a compositional bias: basic and acidic residues; that stretch reads KSIERDTKETKETKS. Positions 355-387 are disordered; sequence KSIERDTKETKETKSKQPVSFSTEADGDIAVGE.

It belongs to the RecA family.

Its subcellular location is the cytoplasm. Can catalyze the hydrolysis of ATP in the presence of single-stranded DNA, the ATP-dependent uptake of single-stranded DNA by duplex DNA, and the ATP-dependent hybridization of homologous single-stranded DNAs. It interacts with LexA causing its activation and leading to its autocatalytic cleavage. The polypeptide is Protein RecA (Leptospira biflexa serovar Patoc (strain Patoc 1 / ATCC 23582 / Paris)).